The following is an 87-amino-acid chain: Small ribosomal subunit protein bS20 (87 aa).

Residues 1-15 (MANTRSAKKMVRKIA) show a composition bias toward basic residues. Disordered stretches follow at residues 1 to 22 (MANT…DVNK) and 64 to 87 (KGVT…KAMA).

This sequence belongs to the bacterial ribosomal protein bS20 family.

Binds directly to 16S ribosomal RNA. The protein is Small ribosomal subunit protein bS20 of Hyphomonas neptunium (strain ATCC 15444).